Here is a 444-residue protein sequence, read N- to C-terminus: MITLRKVPLALAIAAGILSAQAGAVDFKGYARSGIGWTGSGGEQQCFQATGAQSKYRLGNECETYAEIKLGQEVWKEGDKSFYFDTNVAYSVAQQNDWEATDPAFREANVQGKNLIDWLPGSTIWAGKRFYQRHDVHMIDFYYWDISGPGAGLENIDVGFGKLSLAATRSSEAGGSSSFASNSIYDYTTRTANDVFDVRLAQMEINPGGTLELGADYGRANERDGYYLVDGASKDGWMFTAEHTQSMLKGFNKFVLQYATDSMTSQGKGLSQGSSIGTSDNINYAMNNNGHLWRVLDHGAISLGDSWDLMYVGMYQDINLDSNNGTKWWTVGVRPMFKWTPIMSTLLEVGYDNVKSQETGDTNNQYKITLAQQWQAGDSIWSRPAIRVFATYAKWDEKWGYAPSGNNTKAGYNPGVAYSDTSLNSFSRGDNDEWSFGAQMEIWW.

The N-terminal stretch at 1 to 24 (MITLRKVPLALAIAAGILSAQAGA) is a signal peptide.

Belongs to the porin LamB (TC 1.B.3) family. In terms of assembly, homotrimer formed of three 18-stranded antiparallel beta-barrels, containing three independent channels.

Its subcellular location is the cell outer membrane. It carries out the reaction beta-maltose(in) = beta-maltose(out). Functionally, involved in the transport of maltose and maltodextrins. This is Maltoporin from Enterobacter sp. (strain 638).